A 206-amino-acid chain; its full sequence is Small ribosomal subunit protein uS2 (206 aa).

Belongs to the universal ribosomal protein uS2 family.

In Pyrobaculum neutrophilum (strain DSM 2338 / JCM 9278 / NBRC 100436 / V24Sta) (Thermoproteus neutrophilus), this protein is Small ribosomal subunit protein uS2.